The chain runs to 839 residues: Amyloid-beta A4 precursor protein-binding family A member 1 (839 aa).

Disordered stretches follow at residues 1–118 (MNHL…DESA), 235–346 (RLHH…EKRD), and 362–437 (VKTR…ESRK). Positions 23–38 (ESVEADLEHPEVEEEQ) are enriched in acidic residues. A Phosphoserine modification is found at Ser79. Composition is skewed to basic and acidic residues over residues 103 to 112 (DGYEAERAQD) and 237 to 255 (HHYD…KEAE). The segment at 227–315 (YRQEALGARL…TPGGGHPDSP (89 aa)) is munc-18-1 binding. Residues Ser243, Ser247, Ser249, Ser264, Ser281, and Ser286 each carry the phosphoserine modification. A Phosphothreonine modification is found at Thr306. Ser314 and Ser369 each carry phosphoserine. Phosphothreonine is present on Thr372. Residues 375–438 (EPKEPIWVMR…ASTNKESRKS (64 aa)) form an LIN-2/CASK binding region. The span at 389 to 400 (PTRDCDDQRPVD) shows a compositional bias: basic and acidic residues. Positions 401–417 (GDSPSPGSSSPLGAESS) are enriched in low complexity. 4 positions are modified to phosphoserine: Ser403, Ser405, Ser410, and Ser570. The PID domain occupies 459–645 (DGIIFAANYL…LLNTQDMYND (187 aa)). The interval 628–643 (LSQKEYSDLLNTQDMY) is autoinhibitory helix linker. PDZ domains lie at 658–744 (DVFI…IVRC) and 749–824 (TVLI…TMPA).

Part of a multimeric complex containing STXBP1 and STX1A. Interacts with STXBP1. Component of the brain-specific heterotrimeric complex (LIN-10-LIN-2-LIN-7 complex) composed of at least APBA1, CASK, and LIN7, which associates with the motor protein KIF17 to transport vesicles along microtubules. Within the complex, interacts (via PDZ domain) with the motor protein KIF17; the interaction is direct and is required for association of KIF17 with the cargo that is to be transported. Binds to the cytoplasmic domain of amyloid protein (APP). Interacts (via PDZ 1 and 2 domains) with FSPB. Isoform 2 interacts (via its truncated PID domain) with active, GTP-bound RAB6A and RAB6B. Brain. Detected in the cerebellum, hippocampus, olfactory system, piriform and entorhinal cortex, supraoptic nucleus of the hypothalamus, substantia nigra, and other mesencephalic areas.

It localises to the cytoplasm. It is found in the perinuclear region. The protein localises to the nucleus. Its subcellular location is the golgi apparatus. Its function is as follows. Putative function in synaptic vesicle exocytosis by binding to Munc18-1, an essential component of the synaptic vesicle exocytotic machinery. May modulate processing of the amyloid-beta precursor protein (APP) and hence formation of APP-beta. This chain is Amyloid-beta A4 precursor protein-binding family A member 1 (Apba1), found in Rattus norvegicus (Rat).